Here is a 185-residue protein sequence, read N- to C-terminus: Ubiquitin-conjugating enzyme E2 2 (185 aa).

Residues 4-150 (PSKKRLIRDF…VKATVEASWL (147 aa)) form the UBC core domain. The active-site Glycyl thioester intermediate is the cysteine 88. Over residues 149-173 (WLDDGEMPESIEEDDEAEAEAEAEA) the composition is skewed to acidic residues. A disordered region spans residues 149-185 (WLDDGEMPESIEEDDEAEAEAEAEATVDRSAPQTASA).

The protein belongs to the ubiquitin-conjugating enzyme family.

It is found in the cytoplasm. The protein resides in the nucleus. The catalysed reaction is S-ubiquitinyl-[E1 ubiquitin-activating enzyme]-L-cysteine + [E2 ubiquitin-conjugating enzyme]-L-cysteine = [E1 ubiquitin-activating enzyme]-L-cysteine + S-ubiquitinyl-[E2 ubiquitin-conjugating enzyme]-L-cysteine.. It participates in protein modification; protein ubiquitination. Catalyzes the covalent attachment of ubiquitin to other proteins. Plays a role in transcription regulation by catalyzing the monoubiquitination of histone H2B to form H2BK123ub1. H2BK123ub1 gives a specific tag for epigenetic transcriptional activation and is also a prerequisite for H3K4me and H3K79me formation. Also involved in postreplication repair of UV-damaged DNA, in N-end rule-dependent protein degradation and in sporulation. The chain is Ubiquitin-conjugating enzyme E2 2 (UBC2) from Mycosarcoma maydis (Corn smut fungus).